A 550-amino-acid polypeptide reads, in one-letter code: Hydroxylamine reductase (550 aa).

4 residues coordinate [2Fe-2S] cluster: cysteine 3, cysteine 6, cysteine 18, and cysteine 25. Hybrid [4Fe-2O-2S] cluster is bound by residues histidine 249, glutamate 273, cysteine 317, cysteine 405, cysteine 433, cysteine 458, glutamate 492, and lysine 494. At cysteine 405 the chain carries Cysteine persulfide.

Belongs to the HCP family. It depends on [2Fe-2S] cluster as a cofactor. Hybrid [4Fe-2O-2S] cluster serves as cofactor.

Its subcellular location is the cytoplasm. It catalyses the reaction A + NH4(+) + H2O = hydroxylamine + AH2 + H(+). In terms of biological role, catalyzes the reduction of hydroxylamine to form NH(3) and H(2)O. This Escherichia coli O6:H1 (strain CFT073 / ATCC 700928 / UPEC) protein is Hydroxylamine reductase.